The sequence spans 72 residues: Crustacean hyperglycemic hormone (72 aa).

Residue glutamine 1 is modified to Pyrrolidone carboxylic acid. Position 3 is a D-phenylalanine (phenylalanine 3). Disulfide bonds link cysteine 7–cysteine 43, cysteine 23–cysteine 39, and cysteine 26–cysteine 52. A Valine amide modification is found at valine 72.

In terms of tissue distribution, produced by the medulla terminalis X-organ in the eyestalks and transported to the sinus gland where they are stored and released.

The protein localises to the secreted. Its function is as follows. Hormone found in the sinus gland of isopods and decapods which controls the blood sugar level. Has a secretagogue action over the amylase released from the midgut gland. May act as a stress hormone and may be involved in the control of molting and reproduction. This Astacus astacus (Noble crayfish) protein is Crustacean hyperglycemic hormone.